The primary structure comprises 438 residues: Adenylosuccinate synthetase (438 aa).

GTP is bound by residues 13–19 (GDEGKGK) and 41–43 (GHT). The active-site Proton acceptor is the Asp14. Asp14 and Gly41 together coordinate Mg(2+). IMP-binding positions include 14-17 (DEGK), 39-42 (NAGH), Thr130, Arg144, Gln225, Thr240, and Arg310. His42 serves as the catalytic Proton donor. 306 to 312 (ATTGRLR) contacts substrate. Residues Arg312, 338-340 (KLD), and 421-423 (STG) contribute to the GTP site.

This sequence belongs to the adenylosuccinate synthetase family. As to quaternary structure, homodimer. The cofactor is Mg(2+).

It localises to the cytoplasm. It carries out the reaction IMP + L-aspartate + GTP = N(6)-(1,2-dicarboxyethyl)-AMP + GDP + phosphate + 2 H(+). It participates in purine metabolism; AMP biosynthesis via de novo pathway; AMP from IMP: step 1/2. Its function is as follows. Plays an important role in the de novo pathway of purine nucleotide biosynthesis. Catalyzes the first committed step in the biosynthesis of AMP from IMP. The chain is Adenylosuccinate synthetase from Vibrio parahaemolyticus serotype O3:K6 (strain RIMD 2210633).